We begin with the raw amino-acid sequence, 303 residues long: Glycine--tRNA ligase alpha subunit (303 aa).

This sequence belongs to the class-II aminoacyl-tRNA synthetase family. As to quaternary structure, tetramer of two alpha and two beta subunits.

It is found in the cytoplasm. The catalysed reaction is tRNA(Gly) + glycine + ATP = glycyl-tRNA(Gly) + AMP + diphosphate. The protein is Glycine--tRNA ligase alpha subunit of Klebsiella pneumoniae subsp. pneumoniae (strain ATCC 700721 / MGH 78578).